We begin with the raw amino-acid sequence, 214 residues long: Protein verrocchio (214 aa).

In terms of assembly, probably homomultimerizes. Component of the MTV complex, composed of moi/modigliani, tea and ver/verrocchio. Interacts with moi/modigliani and tea (via C-terminus); the interactions are direct and require fully intact moi/modigliani and ver/verrocchio. The MTV complex is recruited to telomeres by the HipHop-HOAP complex, consisting of HipHop, cav/HOAP and Su(var)205/HP1 to form the terminin telomere-capping complex. Interacts with cav/HOAP; the interaction is direct. Interacts with Su(var)205/HP1; the interaction is indirect and probably requires cav/HOAP or moi/modigliani. Probably interacts with peo (via N-terminus and UBC domain).

The protein resides in the nucleus. It is found in the chromosome. It localises to the telomere. Functionally, part of the MTV complex that associates with the HipHop-HOAP complex to form the terminin telomere-capping complex involved in telomere maintenance and prevention of telomere fusion. As part of the MTV complex binds single stranded DNA in a sequence-independent manner, protecting it from degradation. The sequence is that of Protein verrocchio from Drosophila melanogaster (Fruit fly).